Consider the following 267-residue polypeptide: Phosphonates import ATP-binding protein PhnC 1 (267 aa).

The ABC transporter domain occupies 3 to 247 (LSLDGVDLVH…ALDALYANEQ (245 aa)). 36-43 (GPSGAGKT) lines the ATP pocket.

It belongs to the ABC transporter superfamily. Phosphonates importer (TC 3.A.1.9.1) family. In terms of assembly, the complex is composed of two ATP-binding proteins (PhnC), two transmembrane proteins (PhnE) and a solute-binding protein (PhnD).

It is found in the cell inner membrane. It catalyses the reaction phosphonate(out) + ATP + H2O = phosphonate(in) + ADP + phosphate + H(+). Functionally, part of the ABC transporter complex PhnCDE involved in phosphonates import. Responsible for energy coupling to the transport system. This Pseudomonas aeruginosa (strain ATCC 15692 / DSM 22644 / CIP 104116 / JCM 14847 / LMG 12228 / 1C / PRS 101 / PAO1) protein is Phosphonates import ATP-binding protein PhnC 1.